The primary structure comprises 528 residues: Transcription factor cghF (528 aa).

A disordered region spans residues 232–283; sequence TPPNHATSSTPTSTRTPPTYHPHGPRPKSPLSSTPSPRTESTKSAAPSRDLA. A compositionally biased stretch (low complexity) spans 238-249; sequence TSSTPTSTRTPP. Polar residues predominate over residues 261–276; that stretch reads PLSSTPSPRTESTKSA.

Its subcellular location is the nucleus. Its function is as follows. Transcription factor that regulates the expression of the gene cluster that mediates the biosynthesis of the tetramic acid Sch210972, a potential anti-HIV fungal natural product that contains a decalin core. The sequence is that of Transcription factor cghF from Chaetomium globosum (strain ATCC 6205 / CBS 148.51 / DSM 1962 / NBRC 6347 / NRRL 1970) (Soil fungus).